The following is an 877-amino-acid chain: Alanine--tRNA ligase (877 aa).

Zn(2+)-binding residues include His563, His567, Cys665, and His669.

This sequence belongs to the class-II aminoacyl-tRNA synthetase family. Zn(2+) serves as cofactor.

It localises to the cytoplasm. It catalyses the reaction tRNA(Ala) + L-alanine + ATP = L-alanyl-tRNA(Ala) + AMP + diphosphate. Catalyzes the attachment of alanine to tRNA(Ala) in a two-step reaction: alanine is first activated by ATP to form Ala-AMP and then transferred to the acceptor end of tRNA(Ala). Also edits incorrectly charged Ser-tRNA(Ala) and Gly-tRNA(Ala) via its editing domain. This chain is Alanine--tRNA ligase, found in Thermoanaerobacter pseudethanolicus (strain ATCC 33223 / 39E) (Clostridium thermohydrosulfuricum).